Consider the following 221-residue polypeptide: Chalcone--flavanone isomerase (221 aa).

3 residues coordinate substrate: Thr-50, Asn-115, and Thr-192.

The protein belongs to the chalcone isomerase family.

The enzyme catalyses a chalcone = a flavanone.. The protein operates within secondary metabolite biosynthesis; flavonoid biosynthesis. In terms of biological role, catalyzes the intramolecular cyclization of bicyclic chalcones into tricyclic (S)-flavanones. Responsible for the isomerization of 4,2',4',6'-tetrahydroxychalcone (also termed chalcone) into naringenin. This is Chalcone--flavanone isomerase (CHI) from Phaseolus vulgaris (Kidney bean).